Consider the following 309-residue polypeptide: Probable 5-dehydro-4-deoxyglucarate dehydratase (309 aa).

This sequence belongs to the DapA family.

It catalyses the reaction 5-dehydro-4-deoxy-D-glucarate + H(+) = 2,5-dioxopentanoate + CO2 + H2O. It participates in carbohydrate acid metabolism; D-glucarate degradation; 2,5-dioxopentanoate from D-glucarate: step 2/2. The protein is Probable 5-dehydro-4-deoxyglucarate dehydratase of Saccharopolyspora erythraea (strain ATCC 11635 / DSM 40517 / JCM 4748 / NBRC 13426 / NCIMB 8594 / NRRL 2338).